Here is a 105-residue protein sequence, read N- to C-terminus: DNA-directed RNA polymerase subunit omega (105 aa).

It belongs to the RNA polymerase subunit omega family. The RNAP catalytic core consists of 2 alpha, 1 beta, 1 beta' and 1 omega subunit. When a sigma factor is associated with the core the holoenzyme is formed, which can initiate transcription.

It carries out the reaction RNA(n) + a ribonucleoside 5'-triphosphate = RNA(n+1) + diphosphate. Functionally, promotes RNA polymerase assembly. Latches the N- and C-terminal regions of the beta' subunit thereby facilitating its interaction with the beta and alpha subunits. This chain is DNA-directed RNA polymerase subunit omega, found in Streptococcus pyogenes serotype M12 (strain MGAS2096).